Reading from the N-terminus, the 652-residue chain is tRNA 5-methylaminomethyl-2-thiouridine biosynthesis bifunctional protein MnmC (652 aa).

A tRNA (mnm(5)s(2)U34)-methyltransferase region spans residues 1 to 227 (MLSWKNDLTP…KREMLTGKYS (227 aa)). The FAD-dependent cmnm(5)s(2)U34 oxidoreductase stretch occupies residues 259–652 (IGAGIAGSTL…ARFLYRRIRK (394 aa)).

In the N-terminal section; belongs to the methyltransferase superfamily. tRNA (mnm(5)s(2)U34)-methyltransferase family. It in the C-terminal section; belongs to the DAO family. FAD serves as cofactor.

The protein resides in the cytoplasm. The enzyme catalyses 5-aminomethyl-2-thiouridine(34) in tRNA + S-adenosyl-L-methionine = 5-methylaminomethyl-2-thiouridine(34) in tRNA + S-adenosyl-L-homocysteine + H(+). Catalyzes the last two steps in the biosynthesis of 5-methylaminomethyl-2-thiouridine (mnm(5)s(2)U) at the wobble position (U34) in tRNA. Catalyzes the FAD-dependent demodification of cmnm(5)s(2)U34 to nm(5)s(2)U34, followed by the transfer of a methyl group from S-adenosyl-L-methionine to nm(5)s(2)U34, to form mnm(5)s(2)U34. This chain is tRNA 5-methylaminomethyl-2-thiouridine biosynthesis bifunctional protein MnmC, found in Leptospira borgpetersenii serovar Hardjo-bovis (strain JB197).